Consider the following 109-residue polypeptide: Iron-sulfur cluster assembly protein CyaY (109 aa).

It belongs to the frataxin family.

Involved in iron-sulfur (Fe-S) cluster assembly. May act as a regulator of Fe-S biogenesis. In Albidiferax ferrireducens (strain ATCC BAA-621 / DSM 15236 / T118) (Rhodoferax ferrireducens), this protein is Iron-sulfur cluster assembly protein CyaY.